A 496-amino-acid polypeptide reads, in one-letter code: Glycerol kinase (496 aa).

T12 serves as a coordination point for ADP. ATP contacts are provided by T12, T13, and S14. A sn-glycerol 3-phosphate-binding site is contributed by T12. Residue R16 participates in ADP binding. 3 residues coordinate sn-glycerol 3-phosphate: R82, E83, and Y134. Positions 82, 83, and 134 each coordinate glycerol. Phosphohistidine; by HPr is present on H230. Residue D244 participates in sn-glycerol 3-phosphate binding. The glycerol site is built by D244 and Q245. Residues T266 and G309 each coordinate ADP. The ATP site is built by T266, G309, Q313, and G410. ADP-binding residues include G410 and N414.

Belongs to the FGGY kinase family. As to quaternary structure, homotetramer and homodimer (in equilibrium). The phosphoenolpyruvate-dependent sugar phosphotransferase system (PTS), including enzyme I, and histidine-containing protein (HPr) are required for the phosphorylation, which leads to the activation of the enzyme.

It carries out the reaction glycerol + ATP = sn-glycerol 3-phosphate + ADP + H(+). It participates in polyol metabolism; glycerol degradation via glycerol kinase pathway; sn-glycerol 3-phosphate from glycerol: step 1/1. Its activity is regulated as follows. Activated by phosphorylation and inhibited by fructose 1,6-bisphosphate (FBP). Its function is as follows. Key enzyme in the regulation of glycerol uptake and metabolism. Catalyzes the phosphorylation of glycerol to yield sn-glycerol 3-phosphate. The sequence is that of Glycerol kinase from Bacillus thuringiensis subsp. konkukian (strain 97-27).